Here is a 549-residue protein sequence, read N- to C-terminus: Chaperonin GroEL (549 aa).

ATP-binding positions include 29-32, K50, 86-90, G414, 477-479, and D493; these read TLGP, DGTTT, and NAA.

It belongs to the chaperonin (HSP60) family. As to quaternary structure, forms a cylinder of 14 subunits composed of two heptameric rings stacked back-to-back. Interacts with the co-chaperonin GroES.

It localises to the cytoplasm. The catalysed reaction is ATP + H2O + a folded polypeptide = ADP + phosphate + an unfolded polypeptide.. Its function is as follows. Together with its co-chaperonin GroES, plays an essential role in assisting protein folding. The GroEL-GroES system forms a nano-cage that allows encapsulation of the non-native substrate proteins and provides a physical environment optimized to promote and accelerate protein folding. In Geotalea uraniireducens (strain Rf4) (Geobacter uraniireducens), this protein is Chaperonin GroEL.